A 155-amino-acid chain; its full sequence is Archaemetzincin (155 aa).

His109 contacts Zn(2+). Glu110 (proton acceptor) is an active-site residue. Zn(2+) is bound by residues His113, His119, Cys120, Cys125, Cys144, and Cys147.

The protein belongs to the peptidase M54 family. Monomer. Zn(2+) serves as cofactor.

In terms of biological role, probable zinc metalloprotease whose natural substrate is unknown. The sequence is that of Archaemetzincin from Pyrobaculum aerophilum (strain ATCC 51768 / DSM 7523 / JCM 9630 / CIP 104966 / NBRC 100827 / IM2).